The following is a 382-amino-acid chain: D-galactonate dehydratase (382 aa).

Position 183 (Asp183) interacts with Mg(2+). The Proton donor role is filled by His185. 2 residues coordinate Mg(2+): Glu209 and Glu235. The active-site Proton acceptor is the His285.

Belongs to the mandelate racemase/muconate lactonizing enzyme family. GalD subfamily. The cofactor is Mg(2+).

It carries out the reaction D-galactonate = 2-dehydro-3-deoxy-D-galactonate + H2O. The protein operates within carbohydrate acid metabolism; D-galactonate degradation; D-glyceraldehyde 3-phosphate and pyruvate from D-galactonate: step 1/3. Its function is as follows. Catalyzes the dehydration of D-galactonate to 2-keto-3-deoxy-D-galactonate. This chain is D-galactonate dehydratase, found in Escherichia fergusonii (strain ATCC 35469 / DSM 13698 / CCUG 18766 / IAM 14443 / JCM 21226 / LMG 7866 / NBRC 102419 / NCTC 12128 / CDC 0568-73).